The chain runs to 254 residues: 3-deoxy-manno-octulosonate cytidylyltransferase (254 aa).

It belongs to the KdsB family.

Its subcellular location is the cytoplasm. The catalysed reaction is 3-deoxy-alpha-D-manno-oct-2-ulosonate + CTP = CMP-3-deoxy-beta-D-manno-octulosonate + diphosphate. It participates in nucleotide-sugar biosynthesis; CMP-3-deoxy-D-manno-octulosonate biosynthesis; CMP-3-deoxy-D-manno-octulosonate from 3-deoxy-D-manno-octulosonate and CTP: step 1/1. The protein operates within bacterial outer membrane biogenesis; lipopolysaccharide biosynthesis. Activates KDO (a required 8-carbon sugar) for incorporation into bacterial lipopolysaccharide in Gram-negative bacteria. In Haemophilus influenzae (strain PittEE), this protein is 3-deoxy-manno-octulosonate cytidylyltransferase.